Here is a 317-residue protein sequence, read N- to C-terminus: Secreted frizzled-related protein 5 (317 aa).

The N-terminal stretch at 1–29 (MRAAAAGGGVRTAALALLLGALHWAPARC) is a signal peptide. The FZ domain occupies 48–165 (SKPPQCLDIP…PLDNDLCIAV (118 aa)). Cystine bridges form between Cys-53-Cys-116, Cys-63-Cys-109, Cys-100-Cys-135, Cys-124-Cys-162, Cys-128-Cys-152, Cys-181-Cys-253, Cys-184-Cys-255, and Cys-198-Cys-303. An NTR domain is found at 181–303 (CAQCEMEHSA…AVKFMFSYPC (123 aa)).

Belongs to the secreted frizzled-related protein (sFRP) family. In terms of tissue distribution, highly expressed in the retinal pigment epithelium (RPE) and pancreas. Weak expression in heart, liver and muscle.

Its subcellular location is the secreted. In terms of biological role, soluble frizzled-related proteins (sFRPS) function as modulators of Wnt signaling through direct interaction with Wnts. They have a role in regulating cell growth and differentiation in specific cell types. SFRP5 may be involved in determining the polarity of photoreceptor, and perhaps, other cells in the retina. The protein is Secreted frizzled-related protein 5 (SFRP5) of Homo sapiens (Human).